We begin with the raw amino-acid sequence, 326 residues long: Regulation of nuclear pre-mRNA domain-containing protein 1B (326 aa).

Ser-2 is subject to N-acetylserine. The CID domain occupies 2–133 (SSFSESALEK…QLKLSMEDSK (132 aa)). A compositionally biased stretch (basic and acidic residues) spans 128 to 144 (SMEDSKSPPPKAAEEKK). Positions 128 to 148 (SMEDSKSPPPKAAEEKKSLKR) are disordered. 2 positions are modified to phosphoserine: Ser-132 and Ser-134. A Phosphotyrosine modification is found at Tyr-161. Phosphoserine is present on residues Ser-166 and Ser-299.

Belongs to the UPF0400 (RTT103) family. Homodimer. May form a heterodimer with RPRD1A. Associates with RPAP2. Associates with the RNA polymerase II complex. In terms of tissue distribution, widely expressed in the adult with highest levels in liver, colon, prostate and uterus and lowest levels in heart and kidney. Not detected in rectum.

The protein localises to the nucleus. Its function is as follows. Interacts with phosphorylated C-terminal heptapeptide repeat domain (CTD) of the largest RNA polymerase II subunit POLR2A, and participates in dephosphorylation of the CTD by RPAP2. Transcriptional regulator which enhances expression of CCND1. Promotes binding of RNA polymerase II to the CCDN1 promoter and to the termination region before the poly-A site but decreases its binding after the poly-A site. Prevents RNA polymerase II from reading through the 3' end termination site and may allow it to be recruited back to the promoter through promotion of the formation of a chromatin loop. Also enhances the transcription of a number of other cell cycle-related genes including CDK2, CDK4, CDK6 and cyclin-E but not CDKN1A, CDKN1B or cyclin-A. Promotes cell proliferation. This Mus musculus (Mouse) protein is Regulation of nuclear pre-mRNA domain-containing protein 1B (Rprd1b).